A 613-amino-acid chain; its full sequence is Chaperone protein DnaK (613 aa).

Residues 578–613 are disordered; sequence MYQSQATQGTSQNSSQNNNSQNNNGDTVDADFKESK. The span at 580–602 shows a compositional bias: low complexity; the sequence is QSQATQGTSQNSSQNNNSQNNNG.

The protein belongs to the heat shock protein 70 family.

In terms of biological role, acts as a chaperone. The chain is Chaperone protein DnaK from Picrophilus torridus (strain ATCC 700027 / DSM 9790 / JCM 10055 / NBRC 100828 / KAW 2/3).